A 308-amino-acid chain; its full sequence is Serpentine receptor class V-1 (308 aa).

The next 7 membrane-spanning stretches (helical) occupy residues 15 to 35 (VSTA…YILF), 46 to 68 (PFFR…STFF), 88 to 108 (VVPI…IIFI), 135 to 155 (LLLI…STDF), 184 to 204 (AMVD…AIFI), 222 to 242 (LALS…CSLL), and 256 to 276 (TMWF…LLAL).

It belongs to the nematode receptor-like protein srv family.

The protein resides in the membrane. This chain is Serpentine receptor class V-1 (srv-1), found in Caenorhabditis elegans.